A 432-amino-acid polypeptide reads, in one-letter code: MSETHLSTQRFADLPLHAEVIQALNENGFEFCTPIQALSLPVLLKAKDIAGQAQTGTGKTMAFLVATFNHLLTTPAPQARELNQPRAIIMAPTRELAIQIAKDANLLAKHTGLKVGIVYGGESYEVQREVLDKGVDILIGTTGRIIDYVRQGVISLNSIQAVVLDEADRMFDLGFIKDIRFLFRRMPDASSRLNMLFSATLSMKVQELAYDHMNDPEKVEVTPEEKTSKNIKEEIFYPSTEDKMRLLLTLMEEDWPEKAIVFSNTKHSCENLWSWLEGDGHRVGLLTGDVPQKKRIRILEQFTSGDLDVLVATDVAARGLHISDVSHVYNYDLPDDCEDYVHRIGRTGRAGNKGVSVSFACETYALNLPAIEQYIGHSVPVSRYDREALLDDIPTPVKIHRKHPTSRTRDGAKGAHRSGGARPPRHRTRRPS.

A Q motif motif is present at residues 9-37; sequence QRFADLPLHAEVIQALNENGFEFCTPIQA. Residues 40-219 enclose the Helicase ATP-binding domain; sequence LPVLLKAKDI…YDHMNDPEKV (180 aa). 53–60 is an ATP binding site; sequence AQTGTGKT. Positions 165–168 match the DEAD box motif; it reads DEAD. The 148-residue stretch at 243-390 folds into the Helicase C-terminal domain; sequence KMRLLLTLME…VSRYDREALL (148 aa). The interval 395–432 is disordered; it reads TPVKIHRKHPTSRTRDGAKGAHRSGGARPPRHRTRRPS. A compositionally biased stretch (basic residues) spans 423–432; sequence PPRHRTRRPS.

This sequence belongs to the DEAD box helicase family. RhlB subfamily. In terms of assembly, component of the RNA degradosome, which is a multiprotein complex involved in RNA processing and mRNA degradation.

It is found in the cytoplasm. The catalysed reaction is ATP + H2O = ADP + phosphate + H(+). In terms of biological role, DEAD-box RNA helicase involved in RNA degradation. Has RNA-dependent ATPase activity and unwinds double-stranded RNA. This is ATP-dependent RNA helicase RhlB from Shewanella denitrificans (strain OS217 / ATCC BAA-1090 / DSM 15013).